The following is a 511-amino-acid chain: Maturase K (511 aa).

The protein belongs to the intron maturase 2 family. MatK subfamily.

The protein resides in the plastid. The protein localises to the chloroplast. In terms of biological role, usually encoded in the trnK tRNA gene intron. Probably assists in splicing its own and other chloroplast group II introns. This Triticum aestivum (Wheat) protein is Maturase K.